A 492-amino-acid polypeptide reads, in one-letter code: uncharacterized protein (492 aa).

ATP is bound at residue 266–273; it reads GIQGTGKS.

This sequence belongs to the AAA ATPase family. Highly divergent.

It is found in the plastid. It localises to the chloroplast. This is an uncharacterized protein from Pyropia yezoensis (Susabi-nori).